We begin with the raw amino-acid sequence, 333 residues long: uncharacterized protein (333 aa).

An N-terminal signal peptide occupies residues 1 to 16 (MRPFLMILSVTYIASA). An N-linked (GlcNAc...) asparagine glycan is attached at Asn-204.

This is an uncharacterized protein from Encephalitozoon cuniculi (strain GB-M1) (Microsporidian parasite).